Here is a 199-residue protein sequence, read N- to C-terminus: Protein GrpE (199 aa).

Over residues 1-24 the composition is skewed to basic and acidic residues; it reads MSKQNKKDWKKFKDEHKEEHKVEN. The tract at residues 1–47 is disordered; sequence MSKQNKKDWKKFKDEHKEEHKVENEILEEEIDEKSQHQEPALGHPSY.

It belongs to the GrpE family. As to quaternary structure, homodimer.

Its subcellular location is the cytoplasm. In terms of biological role, participates actively in the response to hyperosmotic and heat shock by preventing the aggregation of stress-denatured proteins, in association with DnaK and GrpE. It is the nucleotide exchange factor for DnaK and may function as a thermosensor. Unfolded proteins bind initially to DnaJ; upon interaction with the DnaJ-bound protein, DnaK hydrolyzes its bound ATP, resulting in the formation of a stable complex. GrpE releases ADP from DnaK; ATP binding to DnaK triggers the release of the substrate protein, thus completing the reaction cycle. Several rounds of ATP-dependent interactions between DnaJ, DnaK and GrpE are required for fully efficient folding. The protein is Protein GrpE of Legionella pneumophila (strain Paris).